Reading from the N-terminus, the 350-residue chain is UDP-N-acetylenolpyruvoylglucosamine reductase (350 aa).

The FAD-binding PCMH-type domain occupies 24-195 (HVEATARWLL…VAVEFNLPLL (172 aa)). Residue Arg172 is part of the active site. Ser245 serves as the catalytic Proton donor. The active site involves Glu342.

The protein belongs to the MurB family. FAD is required as a cofactor.

It is found in the cytoplasm. The enzyme catalyses UDP-N-acetyl-alpha-D-muramate + NADP(+) = UDP-N-acetyl-3-O-(1-carboxyvinyl)-alpha-D-glucosamine + NADPH + H(+). Its pathway is cell wall biogenesis; peptidoglycan biosynthesis. In terms of biological role, cell wall formation. This is UDP-N-acetylenolpyruvoylglucosamine reductase from Xanthomonas euvesicatoria pv. vesicatoria (strain 85-10) (Xanthomonas campestris pv. vesicatoria).